A 279-amino-acid chain; its full sequence is Shikimate dehydrogenase (NADP(+)) (279 aa).

Shikimate is bound by residues 21 to 23 (SMS) and Thr-68. The Proton acceptor role is filled by Lys-72. Residues Asn-93 and Asp-108 each coordinate shikimate. NADP(+)-binding positions include 130–134 (GAGGA) and Leu-219. Tyr-221 provides a ligand contact to shikimate. Residue Gly-242 coordinates NADP(+).

This sequence belongs to the shikimate dehydrogenase family. Homodimer.

It carries out the reaction shikimate + NADP(+) = 3-dehydroshikimate + NADPH + H(+). The protein operates within metabolic intermediate biosynthesis; chorismate biosynthesis; chorismate from D-erythrose 4-phosphate and phosphoenolpyruvate: step 4/7. In terms of biological role, involved in the biosynthesis of the chorismate, which leads to the biosynthesis of aromatic amino acids. Catalyzes the reversible NADPH linked reduction of 3-dehydroshikimate (DHSA) to yield shikimate (SA). The protein is Shikimate dehydrogenase (NADP(+)) of Oleidesulfovibrio alaskensis (strain ATCC BAA-1058 / DSM 17464 / G20) (Desulfovibrio alaskensis).